The primary structure comprises 110 residues: NADH-quinone oxidoreductase subunit K (110 aa).

Transmembrane regions (helical) follow at residues 13 to 33 (VTHG…GIII), 38 to 58 (ILIL…NFLI), and 70 to 90 (VFVF…LAIV).

It belongs to the complex I subunit 4L family. In terms of assembly, NDH-1 is composed of 14 different subunits. Subunits NuoA, H, J, K, L, M, N constitute the membrane sector of the complex.

It localises to the cell inner membrane. The enzyme catalyses a quinone + NADH + 5 H(+)(in) = a quinol + NAD(+) + 4 H(+)(out). Its function is as follows. NDH-1 shuttles electrons from NADH, via FMN and iron-sulfur (Fe-S) centers, to quinones in the respiratory chain. The immediate electron acceptor for the enzyme in this species is believed to be ubiquinone. Couples the redox reaction to proton translocation (for every two electrons transferred, four hydrogen ions are translocated across the cytoplasmic membrane), and thus conserves the redox energy in a proton gradient. The sequence is that of NADH-quinone oxidoreductase subunit K from Francisella tularensis subsp. holarctica (strain FTNF002-00 / FTA).